Here is a 590-residue protein sequence, read N- to C-terminus: Multidrug resistance ABC transporter ATP-binding and permease protein (590 aa).

6 helical membrane-spanning segments follow: residues 35-55 (YLFF…QLQV), 79-99 (IALY…LGIF), 150-170 (IPQA…MLQM), 176-196 (LAMI…MTFG), 261-281 (VMML…IYLI), and 292-312 (LGMM…ATFF). One can recognise an ABC transmembrane type-1 domain in the interval 38–317 (FIIGILAGIV…VATFFTELAK (280 aa)). In terms of domain architecture, ABC transporter spans 349–584 (LSARHVDFAY…HPLYAKYVSE (236 aa)). 382–389 (GPSGGGKS) lines the ATP pocket.

This sequence belongs to the ABC transporter superfamily. Multidrug exporter LmrA (TC 3.A.1.117.1) family. As to quaternary structure, homodimer.

The protein localises to the cell membrane. The enzyme catalyses ATP + H2O + xenobioticSide 1 = ADP + phosphate + xenobioticSide 2.. Its function is as follows. Efflux transporter for a variety of amphiphilic cationic compounds, including antibiotics. In Lactococcus lactis subsp. lactis (strain IL1403) (Streptococcus lactis), this protein is Multidrug resistance ABC transporter ATP-binding and permease protein (lmrA).